A 393-amino-acid polypeptide reads, in one-letter code: MESFLFTSESVNEGHPDKLCDQISDAILDACLEQDPESKVACETCTKTNMVMVFGEITTKANVDYEQIVRKTCREIGFVSADVGLDADNCKVLVNIEQQSPDIAQGVHGHLTKKPEEVGAGDQGHMFGYATDETPELMPLTHVLATKLGAKLTEVRKNGTCPWLRPDGKTQVTIEYINESGAMVPVRVHTVLISTQHDETVTNDEIAADLKEHVIKPVIPEKYLDEKTIFHLNPSGRFVIGGPHGDAGLTGRKIIIDTYGGWGAHGGGAFSGKDPTKVDRSGAYIVRQAAKSIVASGLARRVIVQVSYAIGVPEPLSVFVDSYGTGKIPDKEILEIVKESFDFRPGMISINLDLKRGGNGRFLKTAAYGHFGRDDADFTWEVVKPLKSNKVQA.

Glutamate 9 contributes to the Mg(2+) binding site. Position 15 (histidine 15) interacts with ATP. Glutamate 43 contributes to the K(+) binding site. Glutamate 56 and glutamine 99 together coordinate L-methionine. ATP contacts are provided by residues 167–169 (DGK), 235–238 (SGRF), aspartate 246, 252–253 (RK), alanine 269, lysine 273, and lysine 277. Position 246 (aspartate 246) interacts with L-methionine. Lysine 277 is an L-methionine binding site.

It belongs to the AdoMet synthase family. In terms of assembly, homotetramer. The cofactor is Mn(2+). Mg(2+) serves as cofactor. Requires Co(2+) as cofactor. K(+) is required as a cofactor. As to expression, detected in trichomes (at the protein level).

It localises to the cytoplasm. It catalyses the reaction L-methionine + ATP + H2O = S-adenosyl-L-methionine + phosphate + diphosphate. It functions in the pathway amino-acid biosynthesis; S-adenosyl-L-methionine biosynthesis; S-adenosyl-L-methionine from L-methionine: step 1/1. Its function is as follows. Catalyzes the formation of S-adenosylmethionine from methionine and ATP. The reaction comprises two steps that are both catalyzed by the same enzyme: formation of S-adenosylmethionine (AdoMet) and triphosphate, and subsequent hydrolysis of the triphosphate. In Arabidopsis thaliana (Mouse-ear cress), this protein is S-adenosylmethionine synthase 4 (METK4).